The sequence spans 568 residues: MCLYTRVLILHYHLLPLYGPLYHPRPLPLHSILVYMVHIIICGHYIILFLRNVNVFPIFLQMALWRPSDNTVYLPPPSVARVVNTDDYVTPTSIFYHAGSSRLLTVGNPYFRVPAGGGNKQDIPKVSAYQYRVFRVQLPDPNKFGLPDTSIYNPETQRLVWACAGVEIGRGQPLGVGLSGHPFYNKLDDTESSHAATSNVSEDVRDNVSVDYKQTQLCILGCAPAIGEHWAKGTACKSRPLSQGDCPPLELKNTVLEDGDMVDTGYGAMDFSTLQDTKCEVPLDICQSICKYPDYLQMSADPYGDSMFFCLRREQLFARHFWNRAGTMGDTVPQSLYIKGTGMPASPGSCVYSPSPSGSIVTSDSQLFNKPYWLHKAQGHNNGVCWHNQLFVTVVDTTPSTNLTICASTQSPVPGQYDATKFKQYSRHVEEYDLQFIFQLCTITLTADVMSYIHSMNSSILEDWNFGVPPPPTTSLVDTYRFVQSVAITCQKDAAPAENKDPYDKLKFWNVDLKEKFSLDLDQYPLGRKFLVQAGLRRKPTIGPRKRSAPSATTSSKPAKRVRVRARK.

Basic residues-rich tracts occupy residues R537–S548 and P558–K568. The segment at R537–K568 is disordered.

This sequence belongs to the papillomaviridae L1 protein family. Self-assembles into homopentamers. The capsid has an icosahedral symmetry and consists of 72 capsomers, with each capsomer being a pentamer of L1. Interacts with the minor capsid protein L2; this interaction is necessary for viral genome encapsidation. Interacts with protein E2; this interaction enhances E2-dependent replication and transcription activation.

The protein resides in the virion. Its subcellular location is the host nucleus. Functionally, forms an icosahedral capsid with a T=7 symmetry and a 50 nm diameter. The capsid is composed of 72 pentamers linked to each other by disulfide bonds and associated with L2 proteins. Binds to heparan sulfate proteoglycans on cell surface of basal layer keratinocytes to provide initial virion attachment. This binding mediates a conformational change in the virus capsid that facilitates efficient infection. The virion enters the host cell via endocytosis. During virus trafficking, L1 protein dissociates from the viral DNA and the genomic DNA is released to the host nucleus. The virion assembly takes place within the cell nucleus. Encapsulates the genomic DNA together with protein L2. The polypeptide is Major capsid protein L1 (Human papillomavirus type 18).